The following is a 340-amino-acid chain: DNA repair protein RAD51 homolog B (340 aa).

Positions 1–22 (MSSSSAHQKASPPIEEEATEHG) are disordered. Positions 49 to 78 (TVESVAYSPRKDLLQIKGISEAKVDKIIEA) constitute a HhH domain. 128 to 135 (GEFRSGKT) is an ATP binding site.

Belongs to the RecA family. RAD51 subfamily. As to quaternary structure, self-associates and may interact with XRCC3 homolog. In terms of tissue distribution, highly expressed in mitotic and meiotic tissues, but low levels in differentiated tissues.

The protein localises to the nucleus. Its function is as follows. Binds to single and double-stranded DNA and exhibits DNA-dependent ATPase activity. Unwinds duplex DNA. Component of the meiotic recombination pathway. Seems to play a role in mediating chromosome homology search, chromosome pairing and synapsis at early stages and probably chromosome crossing-over at later stages in meiosis. Probably is involved in the repair of meiotic double strand breaks (DBSs) and in homologous recombination. The chain is DNA repair protein RAD51 homolog B (RAD51B) from Zea mays (Maize).